The chain runs to 394 residues: Elongation factor Tu (394 aa).

Residues Lys-10–Glu-204 form the tr-type G domain. The segment at Gly-19 to Thr-26 is G1. Gly-19 to Thr-26 contributes to the GTP binding site. Thr-26 provides a ligand contact to Mg(2+). Residues Gly-60–Asn-64 form a G2 region. The interval Asp-81–Gly-84 is G3. GTP is bound by residues Asp-81 to His-85 and Asn-136 to Asp-139. A G4 region spans residues Asn-136–Asp-139. Residues Ser-174 to Leu-176 form a G5 region.

This sequence belongs to the TRAFAC class translation factor GTPase superfamily. Classic translation factor GTPase family. EF-Tu/EF-1A subfamily. Monomer.

It is found in the cytoplasm. It carries out the reaction GTP + H2O = GDP + phosphate + H(+). In terms of biological role, GTP hydrolase that promotes the GTP-dependent binding of aminoacyl-tRNA to the A-site of ribosomes during protein biosynthesis. This chain is Elongation factor Tu, found in Chlamydia caviae (strain ATCC VR-813 / DSM 19441 / 03DC25 / GPIC) (Chlamydophila caviae).